A 248-amino-acid chain; its full sequence is Probable succinyl-CoA:3-ketoacid coenzyme A transferase subunit A (248 aa).

24-30 (GGFGLCG) lines the CoA pocket.

It belongs to the 3-oxoacid CoA-transferase subunit A family. As to quaternary structure, heterodimer of a subunit A and a subunit B.

The catalysed reaction is a 3-oxo acid + succinyl-CoA = a 3-oxoacyl-CoA + succinate. The chain is Probable succinyl-CoA:3-ketoacid coenzyme A transferase subunit A (scoA) from Mycobacterium bovis (strain ATCC BAA-935 / AF2122/97).